Consider the following 661-residue polypeptide: Heme transporter BhuA (661 aa).

An N-terminal signal peptide occupies residues 1–23 (MKFTRTLVLASTSLLATVATSQA). The TBDR plug domain maps to 48–159 (KDNIEATGGT…AAGAIRYETV (112 aa)). A TBDR beta-barrel domain is found at 170 to 661 (TFGARIIGSY…TFTFQTAFKF (492 aa)).

The protein belongs to the TonB-dependent receptor family.

It is found in the cell outer membrane. Functionally, heme transporter. This is Heme transporter BhuA (bhuA) from Brucella ovis (strain ATCC 25840 / 63/290 / NCTC 10512).